The primary structure comprises 481 residues: UDP-N-acetylmuramate--L-alanine ligase (481 aa).

Residue glycine 123–threonine 129 participates in ATP binding.

Belongs to the MurCDEF family.

The protein localises to the cytoplasm. The enzyme catalyses UDP-N-acetyl-alpha-D-muramate + L-alanine + ATP = UDP-N-acetyl-alpha-D-muramoyl-L-alanine + ADP + phosphate + H(+). The protein operates within cell wall biogenesis; peptidoglycan biosynthesis. In terms of biological role, cell wall formation. The protein is UDP-N-acetylmuramate--L-alanine ligase of Pseudomonas fluorescens (strain SBW25).